A 255-amino-acid polypeptide reads, in one-letter code: MVWKWMPLLLLLVCVATMCSAQDRTDLLNVCMDAKHHKTKPGPEDKLHDQCSPWKKNACCTASTSQELHKDTSRLYNFNWDHCGKMEPACKRHFIQDTCLYECSPNLGPWIQQVNQSWRKERFLDVPLCKEDCQRWWEDCHTSHTCKSNWHRGWDWTSGVNKCPAGALCRTFESYFPTPAALCEGLWSHSYKVSNYSRGSGRCIQMWFDSAQGNPNEEVARFYAAAMHVNAGEMLHGTGGLLLSLALMLQLWLLG.

The N-terminal stretch at 1 to 16 (MVWKWMPLLLLLVCVA) is a signal peptide. Intrachain disulfides connect cysteine 31–cysteine 59, cysteine 51–cysteine 99, cysteine 60–cysteine 103, cysteine 83–cysteine 169, cysteine 90–cysteine 140, cysteine 129–cysteine 203, cysteine 133–cysteine 183, and cysteine 146–cysteine 163. Folate contacts are provided by aspartate 97 and tyrosine 101. Residue asparagine 115 is glycosylated (N-linked (GlcNAc...) asparagine). Residues 118–122 (WRKER), 151–156 (HRGWDW), and serine 190 contribute to the folate site. N-linked (GlcNAc...) asparagine glycosylation is present at asparagine 195. Residue asparagine 230 is the site of GPI-anchor amidated asparagine attachment. The propeptide at 231-255 (AGEMLHGTGGLLLSLALMLQLWLLG) is removed in mature form.

This sequence belongs to the folate receptor family. N-glycosylated. In terms of tissue distribution, expressed in placenta and hematopoietic cells. Expression is increased in malignant tissues.

It is found in the cell membrane. The protein resides in the secreted. In terms of biological role, binds to folate and reduced folic acid derivatives and mediates delivery of 5-methyltetrahydrofolate and folate analogs into the interior of cells. Has high affinity for folate and folic acid analogs at neutral pH. Exposure to slightly acidic pH after receptor endocytosis triggers a conformation change that strongly reduces its affinity for folates and mediates their release. The polypeptide is Folate receptor beta (FOLR2) (Homo sapiens (Human)).